Consider the following 304-residue polypeptide: tRNA dimethylallyltransferase (304 aa).

10 to 17 (GPTASGKS) serves as a coordination point for ATP. Residue 12–17 (TASGKS) participates in substrate binding. The tract at residues 35 to 38 (DSRQ) is interaction with substrate tRNA.

This sequence belongs to the IPP transferase family. Monomer. The cofactor is Mg(2+).

It catalyses the reaction adenosine(37) in tRNA + dimethylallyl diphosphate = N(6)-dimethylallyladenosine(37) in tRNA + diphosphate. Functionally, catalyzes the transfer of a dimethylallyl group onto the adenine at position 37 in tRNAs that read codons beginning with uridine, leading to the formation of N6-(dimethylallyl)adenosine (i(6)A). The protein is tRNA dimethylallyltransferase of Gloeothece citriformis (strain PCC 7424) (Cyanothece sp. (strain PCC 7424)).